Here is a 143-residue protein sequence, read N- to C-terminus: Large ribosomal subunit protein uL15 (143 aa).

Basic residues-rich tracts occupy residues 1-13 (MIRK…KQRG) and 23-38 (KKHR…GNAG). The segment at 1-38 (MIRKSKKITKQRGSRTCGYGEAKKHRGAGHRGGRGNAG) is disordered.

Belongs to the universal ribosomal protein uL15 family. In terms of assembly, part of the 50S ribosomal subunit.

Its function is as follows. Binds to the 23S rRNA. This chain is Large ribosomal subunit protein uL15, found in Methanococcus vannielii.